The chain runs to 207 residues: Putative zinc finger protein 137 (207 aa).

A C2H2-type 1 zinc finger spans residues C72 to H94. Residues Y100–H122 form a C2H2-type 2; degenerate zinc finger. The segment at Y128–H150 adopts a C2H2-type 3; degenerate zinc-finger fold. C2H2-type zinc fingers lie at residues H156–H178 and Y184–H206.

Belongs to the krueppel C2H2-type zinc-finger protein family.

The protein localises to the nucleus. May be involved in transcriptional regulation. The protein is Putative zinc finger protein 137 (ZNF137P) of Homo sapiens (Human).